A 98-amino-acid chain; its full sequence is UPF0175 protein VNG_0066H (98 aa).

The protein belongs to the UPF0175 family.

This is UPF0175 protein VNG_0066H from Halobacterium salinarum (strain ATCC 700922 / JCM 11081 / NRC-1) (Halobacterium halobium).